Here is a 633-residue protein sequence, read N- to C-terminus: DNA mismatch repair protein MutL (633 aa).

It belongs to the DNA mismatch repair MutL/HexB family.

Functionally, this protein is involved in the repair of mismatches in DNA. It is required for dam-dependent methyl-directed DNA mismatch repair. May act as a 'molecular matchmaker', a protein that promotes the formation of a stable complex between two or more DNA-binding proteins in an ATP-dependent manner without itself being part of a final effector complex. The sequence is that of DNA mismatch repair protein MutL from Macrococcus caseolyticus (strain JCSC5402) (Macrococcoides caseolyticum).